The chain runs to 654 residues: Endoplasmic reticulum chaperone BiP (654 aa).

The first 18 residues, 1 to 18, serve as a signal peptide directing secretion; it reads MKLSLVAAMLLLLSAARA. The required for interaction with ELAPOR1 stretch occupies residues 1-80; the sequence is MKLSLVAAML…EGERLIGDAA (80 aa). 36–39 contacts ATP; it reads GTTY. A Phosphoserine modification is found at Ser-86. Lys-96 is a binding site for ATP. At Lys-125 the chain carries N6-acetyllysine. The tract at residues 125–280 is nucleotide-binding (NBD); the sequence is KPYIQVDIGG…KKKTGKDVRK (156 aa). Tyr-160 bears the 3'-nitrotyrosine mark. Lys-213 is subject to N6-acetyllysine. ATP is bound at residue 227–229; the sequence is GGT. Lys-271 bears the N6-acetyllysine mark. ATP is bound at residue 293 to 300; it reads EKAKRALS. Position 326 is an N6-acetyllysine (Lys-326). Lys-352 participates in a covalent cross-link: Glycyl lysine isopeptide (Lys-Gly) (interchain with G-Cter in SUMO2). N6-acetyllysine; alternate is present on Lys-353. Residue Lys-353 forms a Glycyl lysine isopeptide (Lys-Gly) (interchain with G-Cter in SUMO1); alternate linkage. 364–367 is a binding site for ATP; that stretch reads GSTR. Positions 409–419 are interdomain linker; it reads QDTGDLVLLDV. The interval 420–500 is substrate-binding (SBD); that stretch reads CPLTLGIETV…PRGVPQIEVT (81 aa). Lys-447 carries the N6-succinyllysine modification. Omega-N-methylarginine is present on Arg-492. O-AMP-threonine; alternate is present on Thr-518. Position 518 is a phosphothreonine; alternate (Thr-518). Residue Lys-585 is modified to N6,N6,N6-trimethyllysine; by METTL21A; in vitro. An N6,N6-dimethyllysine; alternate modification is found at Lys-585. Lys-585 carries the post-translational modification N6-methyllysine; alternate. Lys-591 bears the N6-methyllysine mark. The disordered stretch occupies residues 633–654; it reads KLYGSAGPPPTGEEDTAEKDEL. Residues Thr-643 and Thr-648 each carry the phosphothreonine modification. The segment covering 644–654 has biased composition (acidic residues); it reads GEEDTAEKDEL. Positions 651–654 match the Prevents secretion from ER motif; that stretch reads KDEL.

This sequence belongs to the heat shock protein 70 family. As to quaternary structure, monomer and homooligomer; homooligomerization via the interdomain linker inactivates the chaperone activity and acts as a storage of HSPA5/BiP molecules. Interacts with DNAJC1 (via J domain). Component of an EIF2 complex at least composed of CELF1/CUGBP1, CALR, CALR3, EIF2S1, EIF2S2, HSP90B1 and HSPA5. Part of a large chaperone multiprotein complex comprising DNAJB11, HSP90B1, HSPA5, HYOU, PDIA2, PDIA4, PDIA6, PPIB, SDF2L1, UGGT1 and very small amounts of ERP29, but not, or at very low levels, CALR nor CANX. Interacts with TMEM132A and TRIM21. May form a complex with ERLEC1, OS9, SEL1L and SYVN1. Interacts with DNAJC10. Interacts with DNAJB9/ERdj4; leading to recruit HSPA5/BiP to ERN1/IRE1. Interacts with ERN1/IRE1 (via luminal domain); the interaction takes place following interaction with DNAJB9/ERdj4 and leads to inactivate ERN1/IRE1, the interaction also competitively inhibits ERN1 interaction with MANF. Interacts directly with MANF (via SAP domain); the interaction inhibits ATP binding to HSPA5/BiP and subsequent nucleotide exchange. Interacts with EIF2AK3/PERK (via luminal domain); interaction leads to inactivate EIF2AK3/PERK. Interacts with MX1. Interacts with METTL23. Interacts with CEMIP; the interaction induces calcium leakage from the endoplasmic reticulum and cell migration. Interacts with PCSK4 form; the interaction takes place in the endoplasmic reticulum. Interacts with CIPC. Interacts with CCDC88B (via C-terminus); the interaction opposes ERN1-mediated JNK activation, protecting against apoptosis. Interacts with INPP5K; necessary for INPP5K localization at the endoplasmic reticulum. Interacts with MANF; the interaction is direct. Interacts with LOXL2; leading to activate the ERN1/IRE1-XBP1 pathway of the unfolded protein response. Interacts with CLU under stressed condition; interaction increases CLU protein stability; facilitates its retrotranslocation and redistribution to the mitochondria; cooperatively suppress stress-induced apoptosis by stabilizing mitochondrial membrane integrity. Interacts with CCDC47. Interacts with CLN3. Interacts with ELAPOR1; may regulate the function of HSPA5 in apoptosis and cell proliferation. Interacts with CASP7. Interacts with ILDR2; the interaction stabilizes ILDR2 expression. Interacts with ADAM7. In terms of assembly, (Microbial infection) Interacts with Japanese encephalitis virus envelope protein E. (Microbial infection) Interacts with R.delemar invasin CotH3 on the surface of nasal epithelial cells. Interacts with R.delemar invasin CotH2. As to quaternary structure, (Microbial infection) Interacts with Zika virus envelope protein E and non-structural protein 1 in a chaperone-client manner. Post-translationally, AMPylated by FICD. In unstressed cells, AMPylation at Thr-518 by FICD inactivates the chaperome activity: AMPylated form is locked in a relatively inert state and only weakly stimulated by J domain-containing proteins. In response to endoplasmic reticulum stress, de-AMPylation by the same protein, FICD, restores the chaperone activity.

It is found in the endoplasmic reticulum lumen. Its subcellular location is the melanosome. It localises to the cytoplasm. The protein resides in the cell surface. It carries out the reaction ATP + H2O = ADP + phosphate + H(+). The chaperone activity is regulated by ATP-induced allosteric coupling of the nucleotide-binding (NBD) and substrate-binding (SBD) domains. In the ADP-bound and nucleotide-free (apo) states, the two domains have little interaction. In contrast, in the ATP-bound state the two domains are tightly coupled, which results in drastically accelerated kinetics in both binding and release of polypeptide substrates. J domain-containing co-chaperones (DNAJB9/ERdj4 or DNAJC10/ERdj5) stimulate the ATPase activity and are required for efficient substrate recognition by HSPA5/BiP. Homooligomerization inactivates participating HSPA5/BiP protomers and probably act as reservoirs to store HSPA5/BiP molecules when they are not needed by the cell. Its function is as follows. Endoplasmic reticulum chaperone that plays a key role in protein folding and quality control in the endoplasmic reticulum lumen. Involved in the correct folding of proteins and degradation of misfolded proteins via its interaction with DNAJC10/ERdj5, probably to facilitate the release of DNAJC10/ERdj5 from its substrate. Acts as a key repressor of the EIF2AK3/PERK and ERN1/IRE1-mediated unfolded protein response (UPR). In the unstressed endoplasmic reticulum, recruited by DNAJB9/ERdj4 to the luminal region of ERN1/IRE1, leading to disrupt the dimerization of ERN1/IRE1, thereby inactivating ERN1/IRE1. Also binds and inactivates EIF2AK3/PERK in unstressed cells. Accumulation of misfolded protein in the endoplasmic reticulum causes release of HSPA5/BiP from ERN1/IRE1 and EIF2AK3/PERK, allowing their homodimerization and subsequent activation. Plays an auxiliary role in post-translational transport of small presecretory proteins across endoplasmic reticulum (ER). May function as an allosteric modulator for SEC61 channel-forming translocon complex, likely cooperating with SEC62 to enable the productive insertion of these precursors into SEC61 channel. Appears to specifically regulate translocation of precursors having inhibitory residues in their mature region that weaken channel gating. May also play a role in apoptosis and cell proliferation. In terms of biological role, (Microbial infection) Plays an important role in viral binding to the host cell membrane and entry for several flaviruses such as Dengue virus, Zika virus and Japanese encephalitis virus. Acts as a component of the cellular receptor for Dengue virus serotype 2/DENV-2 on human liver cells. (Microbial infection) Acts as a receptor for CotH proteins expressed by fungi of the order mucorales, the causative agent of mucormycosis, which plays an important role in epithelial cell invasion by the fungi. Acts as a receptor for R.delemar CotH3 in nasal epithelial cells, which may be an early step in rhinoorbital/cerebral mucormycosis (RCM) disease progression. The chain is Endoplasmic reticulum chaperone BiP from Homo sapiens (Human).